The sequence spans 176 residues: N,N-dimethyl phenylurea N-demethylase subunit beta (176 aa).

The protein belongs to the bacterial ring-hydroxylating dioxygenase beta subunit family. In terms of assembly, pdmA (subunit alpha) and PdmB (subunit beta) form the oxygenase component of a bacterial Rieske non-heme iron oxygenase (RO) system.

It carries out the reaction a 1,1-dimethyl-3-phenylurea + 2 reduced [2Fe-2S]-[ferredoxin] + O2 + 2 H(+) = a 1-methyl-3-phenylurea + formaldehyde + 2 oxidized [2Fe-2S]-[ferredoxin] + H2O. The catalysed reaction is isoproturon + 2 reduced [2Fe-2S]-[ferredoxin] + O2 + 2 H(+) = 1-methyl-3-[4-(propan-2-yl)phenyl]urea + formaldehyde + 2 oxidized [2Fe-2S]-[ferredoxin] + H2O. The enzyme catalyses chlorotoluron + 2 reduced [2Fe-2S]-[ferredoxin] + O2 + 2 H(+) = 3-(3-chloro-4-methylphenyl)-1-methylurea + formaldehyde + 2 oxidized [2Fe-2S]-[ferredoxin] + H2O. It catalyses the reaction metoxuron + 2 reduced [2Fe-2S]-[ferredoxin] + O2 + 2 H(+) = 3-(3-chloro-4-methoxylphenyl)-1-methylurea + formaldehyde + 2 oxidized [2Fe-2S]-[ferredoxin] + H2O. It carries out the reaction monuron + 2 reduced [2Fe-2S]-[ferredoxin] + O2 + 2 H(+) = 3-(4-chlorophenyl)-1-methylurea + formaldehyde + 2 oxidized [2Fe-2S]-[ferredoxin] + H2O. The catalysed reaction is diuron + 2 reduced [2Fe-2S]-[ferredoxin] + O2 + 2 H(+) = 3-(3,4-dichlorophenyl)-1-methylurea + formaldehyde + 2 oxidized [2Fe-2S]-[ferredoxin] + H2O. The enzyme catalyses fluometuron + 2 reduced [2Fe-2S]-[ferredoxin] + O2 + 2 H(+) = 3-[3-(trifluoromethyl)phenyl]-1-methylurea + formaldehyde + 2 oxidized [2Fe-2S]-[ferredoxin] + H2O. It catalyses the reaction fenuron + 2 reduced [2Fe-2S]-[ferredoxin] + O2 + 2 H(+) = 1-methyl-3-phenylurea + formaldehyde + 2 oxidized [2Fe-2S]-[ferredoxin] + H2O. It participates in xenobiotic degradation. With respect to regulation, activity is stimulated in vitro by coexpression of a [3Fe-4S]-type ferredoxin. In terms of biological role, part of the multicomponent N,N-dimethyl phenylurea N-demethylase responsible for the initial N-demethylation step during the bacterial metabolism of N,N-dimethyl-substituted phenylurea herbicides. Catalyzes the mono-N-demethylation of N,N-dimethyl-substituted phenylurea herbicides to their mono-N-demethylated derivatives. Is active on isoproturon (IPU), chlorotoluron, metoxuron, monoron, diuron, fluometuron and fenuron, but cannot transform the N-methoxy-N-methyl-substituted herbicides. This chain is N,N-dimethyl phenylurea N-demethylase subunit beta, found in Sphingobium sp. (strain YBL2).